Here is a 229-residue protein sequence, read N- to C-terminus: Orotate phosphoribosyltransferase (229 aa).

5-phospho-alpha-D-ribose 1-diphosphate contacts are provided by residues R107, K108, K111, H113, and 133-141; that span reads EDLTTAGGS. Residue T137 coordinates orotate.

It belongs to the purine/pyrimidine phosphoribosyltransferase family. PyrE subfamily. In terms of assembly, homodimer. It depends on Mg(2+) as a cofactor.

The catalysed reaction is orotidine 5'-phosphate + diphosphate = orotate + 5-phospho-alpha-D-ribose 1-diphosphate. Its pathway is pyrimidine metabolism; UMP biosynthesis via de novo pathway; UMP from orotate: step 1/2. In terms of biological role, catalyzes the transfer of a ribosyl phosphate group from 5-phosphoribose 1-diphosphate to orotate, leading to the formation of orotidine monophosphate (OMP). The polypeptide is Orotate phosphoribosyltransferase (Rhizobium johnstonii (strain DSM 114642 / LMG 32736 / 3841) (Rhizobium leguminosarum bv. viciae)).